Consider the following 393-residue polypeptide: Telomeric repeat-binding factor 2-interacting protein 1 (393 aa).

N-acetylalanine is present on alanine 2. Phosphoserine occurs at positions 36 and 43. The BRCT domain occupies 78–101 (FISTQYILDCVDRNEKLDLEAYRL). The segment at 104 to 132 (TEQASDPKPGASTEGSTEPEPQPLTGRIA) is disordered. Residue lysine 111 forms a Glycyl lysine isopeptide (Lys-Gly) (interchain with G-Cter in SUMO2) linkage. The region spanning 125–185 (QPLTGRIAYT…SLKDRYLKHL (61 aa)) is the Myb-like domain. 2 positions are modified to phosphoserine: serine 151 and serine 153. A Glycyl lysine isopeptide (Lys-Gly) (interchain with G-Cter in SUMO2) cross-link involves residue lysine 191. The tract at residues 193–304 (LLGNAPVSPS…EEEPKVSTQE (112 aa)) is disordered. Phosphoserine is present on residues serine 200 and serine 203. Glycyl lysine isopeptide (Lys-Gly) (interchain with G-Cter in SUMO2) cross-links involve residues lysine 205, lysine 209, and lysine 237. Residues 223–252 (QNKRAPDLPEEECVKGEIKENGEADNKLFE) are compositionally biased toward basic and acidic residues. A compositionally biased stretch (acidic residues) spans 282–297 (TPEEDSETQPDEEEEE). A Glycyl lysine isopeptide (Lys-Gly) (interchain with G-Cter in SUMO2) cross-link involves residue lysine 366. Residues 377–393 (KKFGAQNVARRIEFRKK) carry the Nuclear localization signal motif.

This sequence belongs to the RAP1 family. Homodimer. Component of the shelterin complex (telosome) composed of TERF1, TERF2, TINF2, TERF2IP ACD and POT1. Binds to TERF2 (but not TERF1) with its C-terminus. Interacts with SLX4/BTBD12. Interacts with TERF2; the interaction is direct. Does not interact with TERF1. Associates with the I-kappa-B-kinase (IKK) core complex, composed of CHUK, IKBKB and IKBKG.

The protein resides in the nucleus. The protein localises to the cytoplasm. Its subcellular location is the chromosome. It localises to the telomere. Acts both as a regulator of telomere function and as a transcription regulator. Involved in the regulation of telomere length and protection as a component of the shelterin complex (telosome). In contrast to other components of the shelterin complex, it is dispensible for telomere capping and does not participate in the protection of telomeres against non-homologous end-joining (NHEJ)-mediated repair. Instead, it is required to negatively regulate telomere recombination and is essential for repressing homology-directed repair (HDR), which can affect telomere length. Does not bind DNA directly: recruited to telomeric double-stranded 5'-TTAGGG-3' repeats via its interaction with TERF2. Independently of its function in telomeres, also acts as a transcription regulator: recruited to extratelomeric 5'-TTAGGG-3' sites via its association with TERF2 or other factors, and regulates gene expression. When cytoplasmic, associates with the I-kappa-B-kinase (IKK) complex and acts as a regulator of the NF-kappa-B signaling by promoting IKK-mediated phosphorylation of RELA/p65, leading to activate expression of NF-kappa-B target genes. The sequence is that of Telomeric repeat-binding factor 2-interacting protein 1 (Terf2ip) from Mus musculus (Mouse).